The chain runs to 314 residues: Mycothiol acetyltransferase (314 aa).

N-acetyltransferase domains lie at 18–156 (ATIR…RPLA) and 168–314 (IRIA…MYQL). Position 38 (Glu-38) interacts with 1D-myo-inositol 2-(L-cysteinylamino)-2-deoxy-alpha-D-glucopyranoside. Acetyl-CoA is bound at residue 92-94 (VVV). 1D-myo-inositol 2-(L-cysteinylamino)-2-deoxy-alpha-D-glucopyranoside contacts are provided by Glu-195, Lys-234, and Glu-248. Residues 252–254 (VGL) and 259–265 (QGHGLGR) contribute to the acetyl-CoA site. Residue Tyr-286 participates in 1D-myo-inositol 2-(L-cysteinylamino)-2-deoxy-alpha-D-glucopyranoside binding.

It belongs to the acetyltransferase family. MshD subfamily. As to quaternary structure, monomer.

The enzyme catalyses 1D-myo-inositol 2-(L-cysteinylamino)-2-deoxy-alpha-D-glucopyranoside + acetyl-CoA = mycothiol + CoA + H(+). Catalyzes the transfer of acetyl from acetyl-CoA to desacetylmycothiol (Cys-GlcN-Ins) to form mycothiol. In Catenulispora acidiphila (strain DSM 44928 / JCM 14897 / NBRC 102108 / NRRL B-24433 / ID139908), this protein is Mycothiol acetyltransferase.